A 528-amino-acid polypeptide reads, in one-letter code: GMP synthase [glutamine-hydrolyzing] (528 aa).

Residues 13–204 (SILILDFGSQ…VYKISCCTAD (192 aa)) form the Glutamine amidotransferase type-1 domain. The active-site Nucleophile is C90. Active-site residues include H178 and E180. A GMPS ATP-PPase domain is found at 205–403 (WTTETYIEET…LGLPDEIIKR (199 aa)). ATP is bound at residue 232 to 238 (SGGVDSS).

As to quaternary structure, homodimer.

The enzyme catalyses XMP + L-glutamine + ATP + H2O = GMP + L-glutamate + AMP + diphosphate + 2 H(+). Its pathway is purine metabolism; GMP biosynthesis; GMP from XMP (L-Gln route): step 1/1. Catalyzes the synthesis of GMP from XMP. The chain is GMP synthase [glutamine-hydrolyzing] from Prochlorococcus marinus (strain AS9601).